Reading from the N-terminus, the 351-residue chain is RCC1 repeat-containing protein C10F6.04 (351 aa).

4 RCC1 repeats span residues 1-48, 50-106, 108-162, and 163-212; these read MLLS…LLDE, SQLW…IVHA, RRRV…CVTN, and EGNL…VLQE.

The protein resides in the cytoplasm. The protein localises to the nucleus. The sequence is that of RCC1 repeat-containing protein C10F6.04 from Schizosaccharomyces pombe (strain 972 / ATCC 24843) (Fission yeast).